Here is a 729-residue protein sequence, read N- to C-terminus: Glycerophosphodiester phosphodiesterase GDPDL5 (729 aa).

Positions 1 to 22 (MACPRVIFLILITFFILQTAFS) are cleaved as a signal peptide. 2 GP-PDE domains span residues 33–320 (PAVI…YRAI) and 337–645 (ITII…ARYR). N-linked (GlcNAc...) asparagine glycans are attached at residues Asn-88, Asn-162, Asn-218, Asn-227, Asn-285, Asn-302, Asn-390, Asn-401, and Asn-507. Residues 709–729 (AIEVPFAFIAMAILVCFFISV) traverse the membrane as a helical segment.

The protein belongs to the glycerophosphoryl diester phosphodiesterase family. As to expression, expressed in stems, flowers and siliques.

Its subcellular location is the membrane. The catalysed reaction is a sn-glycero-3-phosphodiester + H2O = an alcohol + sn-glycerol 3-phosphate + H(+). This chain is Glycerophosphodiester phosphodiesterase GDPDL5, found in Arabidopsis thaliana (Mouse-ear cress).